The primary structure comprises 67 residues: Large ribosomal subunit protein bL35 (67 aa).

This sequence belongs to the bacterial ribosomal protein bL35 family.

The polypeptide is Large ribosomal subunit protein bL35 (Zymomonas mobilis subsp. mobilis (strain ATCC 31821 / ZM4 / CP4)).